The following is a 689-amino-acid chain: Dipeptidyl aminopeptidase BIII (689 aa).

The first 26 residues, 1–26 (MRHPAFRLTLLASTVAFALAPQAAQA), serve as a signal peptide directing secretion. Catalysis depends on charge relay system residues Ser-506, Asp-593, and His-625.

The protein belongs to the peptidase S9C family. As to quaternary structure, monomer.

With respect to regulation, strongly inhibited by the serine protease inhibitor diisopropyl fluorophosphate (DFP), chymostatin, leupeptin, 0.5 mM ZnCl(2), 10 mM o-phenanthlorine and N-tosyl-L-phenyl-alanyl chloromethyl ketone (TPCK), but not by N-tosyl-L-lysyl chloromethyl ketone (TLCK). Activity is not affected significantly by iodoacetate (IAA), L-trans-epoxysuccinyl-leucylamido(4-guanido)butane (E64), pepstatin A and phenylmethanesulfonyl fluoride (PMSF). Activity is stimulated by addition of 0.5 mM CaCl(2), 10 mM EDTA and N-ethylmaleimide (NEM). Its function is as follows. Exopeptidase that catalyzes the removal of dipeptide units (NH2-P2-P1- or -P1'-P2'-COOH) from the free amino or carboxy termini. Prefers substrates composed of bulky, hydrophobic amino acids at P1 and P1' positions. Has endopeptidase activity on N-terminally blocked peptide derivatives which contain aromatic amino acid residue at the P1 position. Exopeptidase activity is much higher than its endopeptidase activity. The sequence is that of Dipeptidyl aminopeptidase BIII from Pseudoxanthomonas mexicana.